The sequence spans 446 residues: Glucarate dehydratase-related protein (446 aa).

Histidine 31, threonine 104, tyrosine 149, and lysine 204 together coordinate substrate. Lysine 206 functions as the Proton acceptor in the catalytic mechanism. 3 residues coordinate Mg(2+): aspartate 234, glutamate 265, and asparagine 288. Aspartate 234–asparagine 236 contacts substrate. Residues asparagine 288, histidine 338–asparagine 340, histidine 367, and arginine 421 each bind substrate. Histidine 338 (proton acceptor) is an active-site residue.

Belongs to the mandelate racemase/muconate lactonizing enzyme family. GlucD subfamily. Requires a divalent metal cation as cofactor.

Its function is as follows. Does not seem to have an in-vivo activity on glucarate or idarate. Its real substrate is unknown. The polypeptide is Glucarate dehydratase-related protein (gudX) (Escherichia coli (strain K12)).